A 278-amino-acid chain; its full sequence is Shikimate dehydrogenase (NADP(+)) (278 aa).

Residues 19–21 (SFS) and threonine 66 contribute to the shikimate site. The Proton acceptor role is filled by lysine 70. The shikimate site is built by asparagine 91 and aspartate 106. NADP(+) contacts are provided by residues 130-134 (GSGGA) and leucine 222. Residue tyrosine 224 participates in shikimate binding. Glycine 245 contacts NADP(+).

It belongs to the shikimate dehydrogenase family. Homodimer.

It catalyses the reaction shikimate + NADP(+) = 3-dehydroshikimate + NADPH + H(+). It participates in metabolic intermediate biosynthesis; chorismate biosynthesis; chorismate from D-erythrose 4-phosphate and phosphoenolpyruvate: step 4/7. In terms of biological role, involved in the biosynthesis of the chorismate, which leads to the biosynthesis of aromatic amino acids. Catalyzes the reversible NADPH linked reduction of 3-dehydroshikimate (DHSA) to yield shikimate (SA). The chain is Shikimate dehydrogenase (NADP(+)) from Methanococcus maripaludis (strain DSM 14266 / JCM 13030 / NBRC 101832 / S2 / LL).